The sequence spans 281 residues: Small ribosomal subunit protein uS3 (281 aa).

The KH type-2 domain maps to 38–106 (IRRLLSTGLE…QVQLNILEVK (69 aa)). Residues 218 to 281 (APAGAERARR…VTHEPQIAES (64 aa)) are disordered. A compositionally biased stretch (low complexity) spans 238-252 (SGAAGTTVTGTDAGR).

The protein belongs to the universal ribosomal protein uS3 family. Part of the 30S ribosomal subunit. Forms a tight complex with proteins S10 and S14.

Binds the lower part of the 30S subunit head. Binds mRNA in the 70S ribosome, positioning it for translation. The chain is Small ribosomal subunit protein uS3 from Mycobacterium leprae (strain TN).